The primary structure comprises 397 residues: 1-deoxy-D-xylulose 5-phosphate reductoisomerase (397 aa).

The NADPH site is built by T12, G13, S14, I15, G38, K39, N40, and N126. K127 lines the 1-deoxy-D-xylulose 5-phosphate pocket. E128 is a binding site for NADPH. Residue D152 participates in Mn(2+) binding. 4 residues coordinate 1-deoxy-D-xylulose 5-phosphate: S153, E154, S188, and H211. E154 is a binding site for Mn(2+). G217 contributes to the NADPH binding site. 4 residues coordinate 1-deoxy-D-xylulose 5-phosphate: S224, N229, K230, and E233. E233 is a binding site for Mn(2+).

Belongs to the DXR family. It depends on Mg(2+) as a cofactor. The cofactor is Mn(2+).

It carries out the reaction 2-C-methyl-D-erythritol 4-phosphate + NADP(+) = 1-deoxy-D-xylulose 5-phosphate + NADPH + H(+). It functions in the pathway isoprenoid biosynthesis; isopentenyl diphosphate biosynthesis via DXP pathway; isopentenyl diphosphate from 1-deoxy-D-xylulose 5-phosphate: step 1/6. Its function is as follows. Catalyzes the NADPH-dependent rearrangement and reduction of 1-deoxy-D-xylulose-5-phosphate (DXP) to 2-C-methyl-D-erythritol 4-phosphate (MEP). In Haemophilus influenzae (strain PittEE), this protein is 1-deoxy-D-xylulose 5-phosphate reductoisomerase.